Reading from the N-terminus, the 225-residue chain is 2-amino-5-formylamino-6-ribosylaminopyrimidin-4(3H)-one 5'-monophosphate deformylase (225 aa).

Fe cation-binding residues include Glu-28, His-30, Asp-39, and His-107.

It belongs to the creatininase superfamily. FAPy deformylase family. Homodimer. Fe(2+) serves as cofactor. Zn(2+) is required as a cofactor.

The catalysed reaction is 2-amino-5-formylamino-6-(5-phospho-D-ribosylamino)pyrimidin-4(3H)-one + H2O = 2,5-diamino-6-(1-D-ribosylamino)pyrimidin-4(3H)-one 5'-phosphate + formate + H(+). The protein operates within cofactor biosynthesis; coenzyme F420 biosynthesis. It functions in the pathway cofactor biosynthesis; riboflavin biosynthesis. Catalyzes the hydrolysis of the formamide of 2-amino-5-formylamino-6-ribosylamino-4(3H)-pyrimidinone 5'-monophosphate (FAPy) to form 2,5-diamino-6-ribosylamino-4(3H)-pyrimidinone 5'-phosphate (APy). This is 2-amino-5-formylamino-6-ribosylaminopyrimidin-4(3H)-one 5'-monophosphate deformylase from Methanocaldococcus fervens (strain DSM 4213 / JCM 15782 / AG86) (Methanococcus fervens).